Here is a 628-residue protein sequence, read N- to C-terminus: tRNA uridine 5-carboxymethylaminomethyl modification enzyme MnmG (628 aa).

FAD contacts are provided by residues glycine 14–glycine 19, valine 126, and serine 181. NAD(+) is bound at residue glycine 273 to phenylalanine 287. An FAD-binding site is contributed by glutamine 370.

This sequence belongs to the MnmG family. Homodimer. Heterotetramer of two MnmE and two MnmG subunits. Requires FAD as cofactor.

It is found in the cytoplasm. Its function is as follows. NAD-binding protein involved in the addition of a carboxymethylaminomethyl (cmnm) group at the wobble position (U34) of certain tRNAs, forming tRNA-cmnm(5)s(2)U34. This chain is tRNA uridine 5-carboxymethylaminomethyl modification enzyme MnmG, found in Bacillus subtilis (strain 168).